Here is a 127-residue protein sequence, read N- to C-terminus: Phospholipase A2 homolog otoconin-22 (127 aa).

N-linked (GlcNAc...) asparagine glycosylation occurs at asparagine 20. Intrachain disulfides connect cysteine 26–cysteine 120, cysteine 28–cysteine 44, cysteine 43–cysteine 99, cysteine 49–cysteine 127, cysteine 50–cysteine 92, cysteine 59–cysteine 85, and cysteine 78–cysteine 90. The N-linked (GlcNAc...) asparagine glycan is linked to asparagine 113.

The protein belongs to the phospholipase A2 family. In terms of assembly, monomer. In terms of tissue distribution, otoconial membrane in the maculae of the saccule and utricle. Otoconia are composites of proteins and inorganic crystals formed in the peripheral portion of the vestibular system of vertebrates. The otoconial membranes contain small crystals of calcium carbonate known as otoliths (ear stones) if there is a single deposit or as otoconia (ear dust) if there are many. Each mineral polymorph of otoconia has a protein unique to that polymorph.

The protein resides in the secreted. Functionally, major protein of the aragonitic otoconia. It is unlikely that this protein has phospholipase A2 activity. The sequence is that of Phospholipase A2 homolog otoconin-22 from Xenopus laevis (African clawed frog).